Here is a 2059-residue protein sequence, read N- to C-terminus: Desmoplakin-A (2059 aa).

The segment covering 1–11 (MSLSGSQTRLH) has biased composition (polar residues). Residues 1 to 25 (MSLSGSQTRLHQISRRSSSRPDLTA) are disordered. Coiled-coil stretches lie at residues 320–354 (IPQK…LLKN) and 397–453 (FKEA…VQTL). Positions 665-690 (EVSSGKTATGVSSGKTATGVSSGKTS) are disordered. Low complexity predominate over residues 671–690 (TATGVSSGKTATGVSSGKTS). Coiled-coil stretches lie at residues 1062–1229 (MEEL…AELE) and 1261–1383 (LQQD…LQQR). 6 Plectin repeats span residues 1450–1488 (YLGG…TLEL), 1489–1526 (LEAQ…KDKL), 1564–1602 (LLEA…NEIL), 1666–1694 (IVDP…FLEL), 1847–1885 (LLEA…SVKL), and 1923–1961 (FLEF…AQKL). A disordered region spans residues 2008 to 2059 (KGISSPYNVSSGPSSRSGSRAGSRTGSRSGSRRGSVDYSSSSVSYTFFSSAS). The span at 2011 to 2059 (SSPYNVSSGPSSRSGSRAGSRTGSRSGSRRGSVDYSSSSVSYTFFSSAS) shows a compositional bias: low complexity.

It belongs to the plakin or cytolinker family.

Its subcellular location is the cell junction. It is found in the desmosome. It localises to the cell membrane. Its function is as follows. Involved in the organization of desmosome cell-cell junctions. Of particular importance in cell adhesion in the skin and during cardiac development. May also play a role in the regulation of Wnt, TGF-beta and Hippo signaling pathways. This chain is Desmoplakin-A, found in Danio rerio (Zebrafish).